The primary structure comprises 174 residues: Shikimate kinase 2 (174 aa).

Residue 12–17 (GCGKTT) participates in ATP binding. Threonine 16 and aspartate 32 together coordinate Mg(2+). 3 residues coordinate substrate: aspartate 34, arginine 58, and glycine 79. An LID domain region spans residues 112-126 (QAAPEEDLRPTLTGK). ATP is bound at residue arginine 120. Arginine 139 is a binding site for substrate.

The protein belongs to the shikimate kinase family. AroL subfamily. In terms of assembly, monomer. Mg(2+) is required as a cofactor.

It is found in the cytoplasm. The enzyme catalyses shikimate + ATP = 3-phosphoshikimate + ADP + H(+). The protein operates within metabolic intermediate biosynthesis; chorismate biosynthesis; chorismate from D-erythrose 4-phosphate and phosphoenolpyruvate: step 5/7. In terms of biological role, catalyzes the specific phosphorylation of the 3-hydroxyl group of shikimic acid using ATP as a cosubstrate. This is Shikimate kinase 2 from Shigella boydii serotype 4 (strain Sb227).